A 109-amino-acid chain; its full sequence is Hainantoxin-XVIII-5 (109 aa).

The N-terminal stretch at 1-18 (MKLSIIIIATSLVIAVVA) is a signal peptide. Residues 19-46 (FPSKDSKAIENDKTEQRMEIVVQETARA) constitute a propeptide that is removed on maturation. 4 disulfides stabilise this stretch: cysteine 47–cysteine 62, cysteine 55–cysteine 68, cysteine 59–cysteine 108, and cysteine 61–cysteine 81.

The protein belongs to the neurotoxin 25 family. F7 subfamily. In terms of tissue distribution, expressed by the venom gland.

The protein resides in the secreted. Functionally, putative ion channel inhibitor. The polypeptide is Hainantoxin-XVIII-5 (Cyriopagopus hainanus (Chinese bird spider)).